The sequence spans 202 residues: Coiled-coil domain-containing protein mdt-28 (202 aa).

Acidic residues-rich tracts occupy residues 1–15 (MFEE…EEQE) and 28–45 (EDID…DDEY). Residues 1–83 (MFEELDAEDG…NEDDEEPIEP (83 aa)) are disordered. Positions 159 to 184 (IEEENLDEAIERQETIIAAAREMLNS) form a coiled coil.

In terms of assembly, interacts with mdt-6 and mdt-30. Ubiquitously expressed in tissues including epidermal, intestinal, pharyngeal and uterine, and is also expressed in vulval muscle cells and gut granules.

The protein resides in the nucleus. Its subcellular location is the cytoplasm. Its function is as follows. Plays a role in normal growth and development. This Caenorhabditis elegans protein is Coiled-coil domain-containing protein mdt-28.